The chain runs to 458 residues: Type III intermediate filament (458 aa).

Residues 1–100 form a head region; the sequence is MEKGYKMNRS…KVNRTNEKAE (100 aa). Residues 97-405 enclose the IF rod domain; it reads EKAEMIELND…KLLEGEENRI (309 aa). A tail region spans residues 406-458; sequence SMPLPSFGSMSLSDAMFEQQPFENRTSKKKIVIKTVETSGGDVISETTQKIED.

Belongs to the intermediate filament family.

This Tetronarce californica (Pacific electric ray) protein is Type III intermediate filament.